The sequence spans 238 residues: 3,4-dihydroxy-2-butanone 4-phosphate synthase (238 aa).

Residues 26-27 (RE), Asp-31, 166-170 (RVGQT), and Glu-190 each bind D-ribulose 5-phosphate. Position 27 (Glu-27) interacts with Mg(2+).

The protein belongs to the DHBP synthase family. As to quaternary structure, homodimer. The cofactor is Mg(2+). Mn(2+) is required as a cofactor.

The enzyme catalyses D-ribulose 5-phosphate = (2S)-2-hydroxy-3-oxobutyl phosphate + formate + H(+). The protein operates within cofactor biosynthesis; riboflavin biosynthesis; 2-hydroxy-3-oxobutyl phosphate from D-ribulose 5-phosphate: step 1/1. Catalyzes the conversion of D-ribulose 5-phosphate to formate and 3,4-dihydroxy-2-butanone 4-phosphate. The chain is 3,4-dihydroxy-2-butanone 4-phosphate synthase from Archaeoglobus fulgidus (strain ATCC 49558 / DSM 4304 / JCM 9628 / NBRC 100126 / VC-16).